The sequence spans 625 residues: Pyriculol/pyriculariol biosynthesis cluster transcription factor 1 (625 aa).

2 disordered regions span residues Met1 to Asp83 and Pro466 to Ser496. Over residues Thr46 to Ser59 the composition is skewed to low complexity. Residues Lys73–Ala132 constitute a DNA-binding region (homeobox). The segment covering Met467–Ser496 has biased composition (polar residues).

The protein localises to the nucleus. Transcriptional regulator; part of the gene cluster that mediates the biosynthesis of pyriculol and pyriculariol, two heptaketides that induce lesion formation upon application on rice leaves but are dispensable for pathogenicity. With TRF1, negatively regulates the expression of the gene cluster and the subsequent pyriculol and pyriculariol production. The polypeptide is Pyriculol/pyriculariol biosynthesis cluster transcription factor 1 (Pyricularia oryzae (strain 70-15 / ATCC MYA-4617 / FGSC 8958) (Rice blast fungus)).